A 363-amino-acid chain; its full sequence is Serine/threonine-protein kinase SRK2A (363 aa).

Residues 4–260 form the Protein kinase domain; it reads YELVKDIGAG…IAEIKKHSWF (257 aa). ATP contacts are provided by residues 10–18 and lysine 33; that span reads IGAGNFGVA. Aspartate 123 acts as the Proton acceptor in catalysis. The tract at residues 306–363 is disordered; sequence SRSIGGFGWGGNGDADGKEEDAEDVEEEEEEVEEEEDDEDEYDKTVKEVHASGEVRIS. Residues 310 to 319 are compositionally biased toward gly residues; sequence GGFGWGGNGD. Residues 322–347 are compositionally biased toward acidic residues; it reads GKEEDAEDVEEEEEEVEEEEDDEDEY. A compositionally biased stretch (basic and acidic residues) spans 348-363; the sequence is DKTVKEVHASGEVRIS.

It belongs to the protein kinase superfamily. Ser/Thr protein kinase family. Interacts with TOPP1. In terms of tissue distribution, expressed in seedlings.

It carries out the reaction L-seryl-[protein] + ATP = O-phospho-L-seryl-[protein] + ADP + H(+). It catalyses the reaction L-threonyl-[protein] + ATP = O-phospho-L-threonyl-[protein] + ADP + H(+). This Arabidopsis thaliana (Mouse-ear cress) protein is Serine/threonine-protein kinase SRK2A (SRK2A).